The sequence spans 284 residues: Pantothenate synthetase (284 aa).

Position 30–37 (30–37) interacts with ATP; the sequence is MGNLHEGH. His37 functions as the Proton donor in the catalytic mechanism. Position 61 (Gln61) interacts with (R)-pantoate. Gln61 is a binding site for beta-alanine. An ATP-binding site is contributed by 149–152; it reads GEKD. Gln155 lines the (R)-pantoate pocket. Residues Val178 and 186–189 each bind ATP; that span reads LSSR.

It belongs to the pantothenate synthetase family. As to quaternary structure, homodimer.

Its subcellular location is the cytoplasm. The enzyme catalyses (R)-pantoate + beta-alanine + ATP = (R)-pantothenate + AMP + diphosphate + H(+). The protein operates within cofactor biosynthesis; (R)-pantothenate biosynthesis; (R)-pantothenate from (R)-pantoate and beta-alanine: step 1/1. Functionally, catalyzes the condensation of pantoate with beta-alanine in an ATP-dependent reaction via a pantoyl-adenylate intermediate. This is Pantothenate synthetase from Yersinia pseudotuberculosis serotype O:1b (strain IP 31758).